The sequence spans 257 residues: uncharacterized protein (257 aa).

Aspartate 34, aspartate 60, valine 61, asparagine 87, tyrosine 152, and lysine 156 together coordinate NAD(+). The active-site Proton acceptor is the tyrosine 152.

It belongs to the short-chain dehydrogenases/reductases (SDR) family.

This is an uncharacterized protein from Bacillus subtilis (strain 168).